A 117-amino-acid polypeptide reads, in one-letter code: Aspartate 1-decarboxylase (117 aa).

The Schiff-base intermediate with substrate; via pyruvic acid role is filled by Ser-25. The residue at position 25 (Ser-25) is a Pyruvic acid (Ser). A substrate-binding site is contributed by Thr-57. Tyr-58 (proton donor) is an active-site residue. 73 to 75 (GAA) serves as a coordination point for substrate.

Belongs to the PanD family. As to quaternary structure, heterooctamer of four alpha and four beta subunits. It depends on pyruvate as a cofactor. In terms of processing, is synthesized initially as an inactive proenzyme, which is activated by self-cleavage at a specific serine bond to produce a beta-subunit with a hydroxyl group at its C-terminus and an alpha-subunit with a pyruvoyl group at its N-terminus.

The protein localises to the cytoplasm. The enzyme catalyses L-aspartate + H(+) = beta-alanine + CO2. It participates in cofactor biosynthesis; (R)-pantothenate biosynthesis; beta-alanine from L-aspartate: step 1/1. In terms of biological role, catalyzes the pyruvoyl-dependent decarboxylation of aspartate to produce beta-alanine. The protein is Aspartate 1-decarboxylase of Bacteroides fragilis (strain ATCC 25285 / DSM 2151 / CCUG 4856 / JCM 11019 / LMG 10263 / NCTC 9343 / Onslow / VPI 2553 / EN-2).